We begin with the raw amino-acid sequence, 944 residues long: Leucine--tRNA ligase 2 (944 aa).

Positions 36–46 match the 'HIGH' region motif; the sequence is PYPNSPWHIGH. The 'KMSKS' region motif lies at 623 to 627; sequence KMSKS. Lysine 626 contributes to the ATP binding site.

It belongs to the class-I aminoacyl-tRNA synthetase family.

It is found in the cytoplasm. It carries out the reaction tRNA(Leu) + L-leucine + ATP = L-leucyl-tRNA(Leu) + AMP + diphosphate. This is Leucine--tRNA ligase 2 from Saccharolobus solfataricus (strain ATCC 35092 / DSM 1617 / JCM 11322 / P2) (Sulfolobus solfataricus).